Here is an 829-residue protein sequence, read N- to C-terminus: Probable beta-glucosidase H (829 aa).

An N-linked (GlcNAc...) asparagine glycan is attached at Asn-13. Asp-225 is an active-site residue. Residues Asn-304, Asn-473, Asn-602, Asn-627, and Asn-664 are each glycosylated (N-linked (GlcNAc...) asparagine). One can recognise a PA14 domain in the interval 389-548; sequence RMLSNAVIHF…DPEQMVANAV (160 aa).

It belongs to the glycosyl hydrolase 3 family.

It localises to the secreted. It carries out the reaction Hydrolysis of terminal, non-reducing beta-D-glucosyl residues with release of beta-D-glucose.. It participates in glycan metabolism; cellulose degradation. Its function is as follows. Beta-glucosidases are one of a number of cellulolytic enzymes involved in the degradation of cellulosic biomass. Catalyzes the last step releasing glucose from the inhibitory cellobiose. This Aspergillus fumigatus (strain ATCC MYA-4609 / CBS 101355 / FGSC A1100 / Af293) (Neosartorya fumigata) protein is Probable beta-glucosidase H (bglH).